The sequence spans 163 residues: ATP synthase subunit b (163 aa).

A helical membrane pass occupies residues 13–33 (SFILFVWFCMKYIWPPIIFAI).

This sequence belongs to the ATPase B chain family. F-type ATPases have 2 components, F(1) - the catalytic core - and F(0) - the membrane proton channel. F(1) has five subunits: alpha(3), beta(3), gamma(1), delta(1), epsilon(1). F(0) has three main subunits: a(1), b(2) and c(10-14). The alpha and beta chains form an alternating ring which encloses part of the gamma chain. F(1) is attached to F(0) by a central stalk formed by the gamma and epsilon chains, while a peripheral stalk is formed by the delta and b chains.

The protein localises to the cell membrane. F(1)F(0) ATP synthase produces ATP from ADP in the presence of a proton or sodium gradient. F-type ATPases consist of two structural domains, F(1) containing the extramembraneous catalytic core and F(0) containing the membrane proton channel, linked together by a central stalk and a peripheral stalk. During catalysis, ATP synthesis in the catalytic domain of F(1) is coupled via a rotary mechanism of the central stalk subunits to proton translocation. In terms of biological role, component of the F(0) channel, it forms part of the peripheral stalk, linking F(1) to F(0). The chain is ATP synthase subunit b from Buchnera aphidicola subsp. Schizaphis graminum (strain Sg).